Reading from the N-terminus, the 490-residue chain is UDP-N-acetylmuramoyl-L-alanyl-D-glutamate--LD-lysine ligase (490 aa).

Ser32 serves as a coordination point for UDP-N-acetyl-alpha-D-muramoyl-L-alanyl-D-glutamate. 110 to 116 (GTNGKTT) contacts ATP. UDP-N-acetyl-alpha-D-muramoyl-L-alanyl-D-glutamate-binding positions include 152–153 (TT), Ser179, Gln185, and Arg187. An N6-carboxylysine modification is found at Lys219.

Belongs to the MurCDEF family. MurE subfamily. Post-translationally, carboxylation is probably crucial for Mg(2+) binding and, consequently, for the gamma-phosphate positioning of ATP.

Its subcellular location is the cytoplasm. It carries out the reaction UDP-N-acetyl-alpha-D-muramoyl-L-alanyl-D-glutamate + L-lysine + ATP = UDP-N-acetyl-alpha-D-muramoyl-L-alanyl-gamma-D-glutamyl-L-lysine + ADP + phosphate + H(+). The enzyme catalyses UDP-N-acetyl-alpha-D-muramoyl-L-alanyl-D-glutamate + D-lysine + ATP = N(6)-(UDP-N-acetyl-alpha-D-muramoyl-L-alanyl-gamma-D-glutamyl)-D-lysine + ADP + phosphate + H(+). Its pathway is cell wall biogenesis; peptidoglycan biosynthesis. Functionally, catalyzes the addition of both L- and D-lysine to the nucleotide precursor UDP-N-acetylmuramoyl-L-alanyl-D-glutamate (UMAG) in the biosynthesis of bacterial cell-wall peptidoglycan. Is also able to use meso-diaminopimelate as the amino acid substrate in vitro, although much less efficiently. The protein is UDP-N-acetylmuramoyl-L-alanyl-D-glutamate--LD-lysine ligase (murE) of Thermotoga maritima (strain ATCC 43589 / DSM 3109 / JCM 10099 / NBRC 100826 / MSB8).